The chain runs to 191 residues: uncharacterized protein (191 aa).

This sequence to B.subtilis GlpP.

This is an uncharacterized protein from Escherichia coli (strain K12).